We begin with the raw amino-acid sequence, 289 residues long: Probable porphobilinogen deaminase (289 aa).

Cys233 is modified (S-(dipyrrolylmethanemethyl)cysteine).

It belongs to the HMBS family. Requires dipyrromethane as cofactor.

It catalyses the reaction 4 porphobilinogen + H2O = hydroxymethylbilane + 4 NH4(+). Its pathway is porphyrin-containing compound metabolism; protoporphyrin-IX biosynthesis; coproporphyrinogen-III from 5-aminolevulinate: step 2/4. Tetrapolymerization of the monopyrrole PBG into the hydroxymethylbilane pre-uroporphyrinogen in several discrete steps. In Methanothermobacter thermautotrophicus (strain ATCC 29096 / DSM 1053 / JCM 10044 / NBRC 100330 / Delta H) (Methanobacterium thermoautotrophicum), this protein is Probable porphobilinogen deaminase (hemC).